Here is a 683-residue protein sequence, read N- to C-terminus: uncharacterized protein (683 aa).

Polar residues-rich tracts occupy residues 407–420 and 512–529; these read FETS…TYTP and EGSS…SSEA. Disordered regions lie at residues 407–427, 509–556, and 621–648; these read FETS…KLST, FSRE…SSTV, and HNTS…DHPD. The segment covering 531-542 has biased composition (low complexity); the sequence is LPPLLTTTPTPT. Composition is skewed to polar residues over residues 543–556 and 621–630; these read NTEK…SSTV and HNTSMPNPHH. Residues 633–648 are compositionally biased toward basic and acidic residues; it reads VKPEDHPHHPEGDHPD. The chain crosses the membrane as a helical span at residues 657–677; that stretch reads IWLLPIAGTIFALVALVIVNI.

Its subcellular location is the host membrane. This is an uncharacterized protein from Alcelaphine herpesvirus 1 (strain C500) (AlHV-1).